Here is a 312-residue protein sequence, read N- to C-terminus: Ribosomal protein L11 methyltransferase (312 aa).

T162, G183, D205, and N248 together coordinate S-adenosyl-L-methionine.

It belongs to the methyltransferase superfamily. PrmA family.

It localises to the cytoplasm. It carries out the reaction L-lysyl-[protein] + 3 S-adenosyl-L-methionine = N(6),N(6),N(6)-trimethyl-L-lysyl-[protein] + 3 S-adenosyl-L-homocysteine + 3 H(+). In terms of biological role, methylates ribosomal protein L11. This chain is Ribosomal protein L11 methyltransferase, found in Bacillus cereus (strain B4264).